Consider the following 311-residue polypeptide: Cell division protein FtsQ (311 aa).

Residues 1-28 are disordered; the sequence is MTTRSPARPLIARRSTPAPTPAPHDPAP. The Cytoplasmic portion of the chain corresponds to 1-46; sequence MTTRSPARPLIARRSTPAPTPAPHDPAPSRLSYRVTRLWLTPIFRK. A helical membrane pass occupies residues 47-67; that stretch reads ALHLGIPVFALFAAVTWYLGD. At 68–311 the chain is on the periplasmic side; it reads ETRVAELFEA…AERPDGDTRG (244 aa). The POTRA domain maps to 91–159; sequence FRVNVLGIDG…GYLAVRIDER (69 aa).

This sequence belongs to the FtsQ/DivIB family. FtsQ subfamily.

The protein localises to the cell inner membrane. In terms of biological role, essential cell division protein. In Jannaschia sp. (strain CCS1), this protein is Cell division protein FtsQ.